The sequence spans 263 residues: Putative aliphatic sulfonates transport permease protein SsuC (263 aa).

Over 1-13 the chain is Cytoplasmic; the sequence is MATPVKKWLLRVA. The chain crosses the membrane as a helical span at residues 14 to 34; that stretch reads PWFLPVGIVAVWQLASSVGWL. Residues 35–43 lie on the Periplasmic side of the membrane; the sequence is STRILPSPE. A helical membrane pass occupies residues 44–64; sequence GVVTAFWTLSASGELWQHLAI. Residues 58–242 form the ABC transmembrane type-1 domain; that stretch reads LWQHLAISSW…LLGKLADVSA (185 aa). Residues 65 to 68 lie on the Cytoplasmic side of the membrane; that stretch reads SSWR. A helical transmembrane segment spans residues 69 to 89; sequence ALIGFSIGGSLGLILGLISGL. Topologically, residues 90–102 are periplasmic; that stretch reads SRWGERLLDTSIQ. A helical transmembrane segment spans residues 103–122; the sequence is MLRNVPHLALIPLVILWFGI. The Cytoplasmic portion of the chain corresponds to 123-125; the sequence is DES. Residues 126 to 148 form a helical membrane-spanning segment; it reads AKIFLVALGTLFPIYINTWHGIR. Over 149 to 164 the chain is Periplasmic; that stretch reads NIDRGLVEMARSYGLS. Residues 165–185 form a helical membrane-spanning segment; sequence GIPLFIHVILPGALPSIMVGV. The Cytoplasmic portion of the chain corresponds to 186–187; the sequence is RF. Residues 188 to 208 form a helical membrane-spanning segment; it reads ALGLMWLTLIVAETISANSGI. Over 209 to 217 the chain is Periplasmic; that stretch reads GYLAMNARE. A helical membrane pass occupies residues 218–238; sequence FLQTDVVVVAIILYALLGKLA. Topologically, residues 239–263 are cytoplasmic; sequence DVSAQLLERLWLRWNPAYHLKEATV.

The protein belongs to the binding-protein-dependent transport system permease family. CysTW subfamily.

It is found in the cell inner membrane. In terms of biological role, part of a binding-protein-dependent transport system for aliphatic sulfonates. Probably responsible for the translocation of the substrate across the membrane. The chain is Putative aliphatic sulfonates transport permease protein SsuC (ssuC) from Escherichia coli (strain K12).